The chain runs to 333 residues: MIETLLQSPSSWTNFFIFFGLAVLLLFAVLGFVTYGILAERKVMGFMQGRIGPNQVGGRFGLLQTVADVLKLLLKEDSIPKAADKPLFILAPVIAFAPAFMVLAVIPFTDKFQFADIGVGLLYYIAVSGITTIGVVTGGWASNNKYSLLGGMRAAAQMISYEIPLVMSVIGVVLLAGSLNLNEIVAAQEKVWYIFAQPIGFVIFLIAAVAELNRTPFDLPEAESELVSGYHTEYSGFRWAFFMLSEYVYFFGMSSLITVLFLGGWNPVMFLGFIPGAVWFALKFSSVVFLLIWFRVTFPRIRGDQLMEFGWKILLPIALANIFLTALIKELFF.

The next 8 membrane-spanning stretches (helical) occupy residues 15–35, 88–108, 117–137, 159–179, 191–211, 239–259, 272–294, and 313–333; these read FFIF…FVTY, FILA…VIPF, IGVG…GVVT, ISYE…AGSL, VWYI…AVAE, WAFF…LITV, GFIP…LIWF, and ILLP…ELFF.

Belongs to the complex I subunit 1 family. NDH-1 is composed of 14 different subunits. Subunits NuoA, H, J, K, L, M, N constitute the membrane sector of the complex.

It localises to the cell membrane. The enzyme catalyses a quinone + NADH + 5 H(+)(in) = a quinol + NAD(+) + 4 H(+)(out). Functionally, NDH-1 shuttles electrons from NADH, via FMN and iron-sulfur (Fe-S) centers, to quinones in the respiratory chain. The immediate electron acceptor for the enzyme in this species is believed to be ubiquinone. Couples the redox reaction to proton translocation (for every two electrons transferred, four hydrogen ions are translocated across the cytoplasmic membrane), and thus conserves the redox energy in a proton gradient. This subunit may bind ubiquinone. The protein is NADH-quinone oxidoreductase subunit H of Bacillus mycoides (strain KBAB4) (Bacillus weihenstephanensis).